A 465-amino-acid chain; its full sequence is MKVYNTLTNKKEEFLTLVPGEVKMYVCGPTVYNFFHIGNARTFVVFDTIRRYLEYRGYKVKFIQNFTDIDDKMIKRANEEGSTVKELGDRFIKEYYKDADDLNIERATKNPRATEFMEEIIKFVSDLIEKGYAYEIDGDVYFSTKKFNSYGKLSGQNLEELQLGARINVDERKKDPMDFAIWKSQKPGEPAWESPWGMGRPGWHIECSCMAYNLLGETIDIHAGGSDLSFPHHENEIAQSEARTGKQFAKYWLHSAFVNVNNQKMSKSLNNFFTAREILEKYDADVLRMFMLSGHYRTQINFSMELLDSTKAALDRLYNSINNLENLLDEVKNEELRDEELEYKNELQKYKEKYIEKMDDDFNTADAISVIFDLIRDVNTNVTIESSKELVKYTLDLIRELGNPLGILQESTKASLEEEIEKLIEERQKARKEKNWALADKIRDNLKERGIVLEDTPQGVRWKQI.

Cys-27 contributes to the Zn(2+) binding site. Residues 29-39 carry the 'HIGH' region motif; the sequence is PTVYNFFHIGN. Positions 207, 232, and 236 each coordinate Zn(2+). The 'KMSKS' region signature appears at 264-268; that stretch reads KMSKS. Lys-267 is a binding site for ATP.

This sequence belongs to the class-I aminoacyl-tRNA synthetase family. As to quaternary structure, monomer. Zn(2+) is required as a cofactor.

It localises to the cytoplasm. The enzyme catalyses tRNA(Cys) + L-cysteine + ATP = L-cysteinyl-tRNA(Cys) + AMP + diphosphate. This chain is Cysteine--tRNA ligase, found in Clostridium botulinum (strain Okra / Type B1).